We begin with the raw amino-acid sequence, 416 residues long: Enolase (416 aa).

Gln-160 contributes to the (2R)-2-phosphoglycerate binding site. Catalysis depends on Glu-204, which acts as the Proton donor. 3 residues coordinate Mg(2+): Asp-239, Glu-280, and Asp-306. Residues Lys-331, Arg-360, Ser-361, and Lys-382 each contribute to the (2R)-2-phosphoglycerate site. Lys-331 serves as the catalytic Proton acceptor.

It belongs to the enolase family. It depends on Mg(2+) as a cofactor.

Its subcellular location is the cytoplasm. It is found in the secreted. The protein localises to the cell surface. The catalysed reaction is (2R)-2-phosphoglycerate = phosphoenolpyruvate + H2O. It participates in carbohydrate degradation; glycolysis; pyruvate from D-glyceraldehyde 3-phosphate: step 4/5. Catalyzes the reversible conversion of 2-phosphoglycerate (2-PG) into phosphoenolpyruvate (PEP). It is essential for the degradation of carbohydrates via glycolysis. The sequence is that of Enolase from Sulfurisphaera tokodaii (strain DSM 16993 / JCM 10545 / NBRC 100140 / 7) (Sulfolobus tokodaii).